A 391-amino-acid polypeptide reads, in one-letter code: MADIDNKEQSELDQDLDDVEEVEEEETGEETKLKARQLTVQMMQNPQILAALQERLDGLVETPTGYIESLPRVVKRRVNALKNLQVKCAQIEAKFYEEVHDLERKYAVLYQPLFDKRFEIINAIYEPTEEECEWKPDEEDEISEELKEKAKIEDEKKDEEKEDPKGIPEFWLTVFKNVDLLSDMVQEHDEPILKHLKDIKVKFSDAGQPMSFVLEFHFEPNEYFTNEVLTKTYRMRSEPDDSDPFSFDGPEIMGCTGCQIDWKKGKNVTLKTIKKKQKHKGRGTVRTVTKTVSNDSFFNFFAPPEVPESGDLDDDAEAILAADFEIGHFLRERIIPRSVLYFTGEAIEDDDDDYDEEGEEADEEGEEEGDEENDPDYDPKKDQNPAECKQQ.

Position 1 is an N-acetylmethionine (M1). Residues 1–10 show a composition bias toward basic and acidic residues; sequence MADIDNKEQS. The segment at 1 to 32 is disordered; that stretch reads MADIDNKEQSELDQDLDDVEEVEEEETGEETK. N-acetylalanine is present on A2. S10 carries the post-translational modification Phosphoserine. Positions 11–28 are enriched in acidic residues; it reads ELDQDLDDVEEVEEEETG. T62 and T64 each carry phosphothreonine. S69 bears the Phosphoserine mark. Residue K116 is modified to N6-acetyllysine. The NAP1L motif motif lies at 125 to 150; the sequence is YEPTEEECEWKPDEEDEISEELKEKA. Residues 132–143 show a composition bias toward acidic residues; it reads CEWKPDEEDEIS. The tract at residues 132 to 163 is disordered; it reads CEWKPDEEDEISEELKEKAKIEDEKKDEEKED. A Phosphoserine modification is found at S143. Residues 144-163 are compositionally biased toward basic and acidic residues; sequence EELKEKAKIEDEKKDEEKED. A Nuclear localization signal motif is present at residues 273-279; the sequence is IKKKQKH. Residues 346–376 show a composition bias toward acidic residues; the sequence is AIEDDDDDYDEEGEEADEEGEEEGDEENDPD. A disordered region spans residues 346 to 391; sequence AIEDDDDDYDEEGEEADEEGEEEGDEENDPDYDPKKDQNPAECKQQ. Basic and acidic residues predominate over residues 377–391; sequence YDPKKDQNPAECKQQ. A Cysteine methyl ester modification is found at C388. C388 carries the S-farnesyl cysteine lipid modification. Residues 389–391 constitute a propeptide, removed in mature form; that stretch reads KQQ.

It belongs to the nucleosome assembly protein (NAP) family. In terms of assembly, homodimer. The dimer binds strongly and sequentially to single and double H2A-H2B heterodimers. Interacts with ERCC6; this interaction increases ERCC6 processivity. Interacts with RAD54. Interacts with SETD1A. As to quaternary structure, (Microbial infection) Interacts with human herpesvirus 8 protein LANA1 (via N-terminus); this interaction is required for LANA1-dependent DNA replication. (Microbial infection) Interacts with hepatitis virus protein NS5A (via C-terminus); this interaction sequesters NAP1L1 in the cytoplasm, blocking its nuclear translocation. In terms of assembly, (Microbial infection) Interacts with Chikungunya virus non-structural protein 3 (via C-terminus). In terms of processing, monoglycylated on glutamate residues. Cannot be polyglycylated due to the absence of functional TTLL10 in human. Post-translationally, polyglutamylated by TTLL4 on glutamate residues, resulting in polyglutamate chains on the gamma-carboxyl group. Both polyglutamylation and monoglycylation modifications can coexist on the same protein on adjacent residues, and lowering polyglycylation levels increases polyglutamylation, and reciprocally. In terms of tissue distribution, ubiquitously expressed.

It localises to the nucleus. Its subcellular location is the melanosome. The protein localises to the cytoplasm. Histone chaperone that plays a role in the nuclear import of H2A-H2B and nucleosome assembly. Also participates in several important DNA repair mechanisms: greatly enhances ERCC6-mediated chromatin remodeling which is essential for transcription-coupled nucleotide excision DNA repair. Also stimulates homologous recombination (HR) by RAD51 and RAD54 which is essential in mitotic DNA double strand break (DSB) repair. Plays a key role in the regulation of embryonic neurogenesis. Promotes the proliferation of neural progenitors and inhibits neuronal differentiation during cortical development. Regulates neurogenesis via the modulation of RASSF10; regulates RASSF10 expression by promoting SETD1A-mediated H3K4 methylation at the RASSF10 promoter. Functionally, (Microbial infection) Positively regulates Epstein-Barr virus reactivation in epithelial cells through the induction of viral BZLF1 expression. Its function is as follows. (Microbial infection) Together with human herpesvirus 8 protein LANA1, assists the proper assembly of the nucleosome on the replicated viral DNA. This is Nucleosome assembly protein 1-like 1 (NAP1L1) from Homo sapiens (Human).